A 106-amino-acid polypeptide reads, in one-letter code: Somatoliberin (106 aa).

The signal sequence occupies residues methionine 1 to glycine 19. The propeptide occupies serine 20–arginine 30. Leucine 74 is modified (leucine amide). The propeptide occupies glutamine 77–glycine 106.

Belongs to the glucagon family.

The protein resides in the secreted. Its function is as follows. GRF is released by the hypothalamus and acts on the adenohypophyse to stimulate the secretion of growth hormone. This chain is Somatoliberin (GHRH), found in Bos taurus (Bovine).